A 465-amino-acid polypeptide reads, in one-letter code: Protein hedgehog (465 aa).

C79 is lipidated: N-palmitoyl cysteine. Positions 143, 144, 149, 179, 180, 183, and 185 each coordinate Ca(2+). Residue G251 is the site of Cholesterol glycine ester attachment.

Belongs to the hedgehog family. As to quaternary structure, interacts with shf. Post-translationally, the C-terminal part of the hedgehog protein precursor displays an autoproteolysis activity that results in the cleavage of the full-length protein into two parts (N-product and C-product). In addition, the C-terminal part displays a cholesterol transferase activity that results by the covalent attachment of a cholesterol moiety to the C-terminal of the newly generated N-product. The N-product is the active species in both local and long-range signaling, whereas the C-product has no signaling activity. Cholesterylation is required for N-product targeting to lipid rafts and multimerization. In terms of processing, N-palmitoylation by Rasp of the hedgehog N-product, within the secretory pathway, is required for the embryonic and larval patterning activities of the hedgehog signal.

The protein localises to the nucleus. The protein resides in the cytoplasm. It localises to the cell membrane. The catalysed reaction is glycyl-L-cysteinyl-[protein] + cholesterol + H(+) = [protein]-C-terminal glycyl cholesterol ester + N-terminal L-cysteinyl-[protein]. Functionally, the C-terminal part of the hedgehog protein precursor displays an autoproteolysis activity that results in the cleavage of the full-length protein into two parts (N-product and C-product). In addition, the C-terminal part displays a cholesterol transferase activity that results by the covalent attachment of a cholesterol moiety to the C-terminal of the newly generated N-product. Once cleaved, the C-product has no signaling activity and diffuses from the cell. In terms of biological role, the dually lipidated hedgehog protein N-product is a morphogen which is essential for a variety of patterning events during development. Establishes the anterior-posterior axis of the embryonic segments and patterns the larval imaginal disks. Binds to the patched (ptc) receptor, which functions in association with smoothened (smo), to activate the transcription of target genes wingless (wg), decapentaplegic (dpp) and ptc. In the absence of hh, ptc represses the constitutive signaling activity of smo through fused (fu). Essential component of a signaling pathway which regulates the Duox-dependent gut immune response to bacterial uracil; required to activate Cad99C-dependent endosome formation, norpA-dependent Ca2+ mobilization and p38 MAPK, which are essential steps in the Duox-dependent production of reactive oxygen species (ROS) in response to intestinal bacterial infection. During photoreceptor differentiation, it up-regulates transcription of Ubr3, which in turn promotes the hh-signaling pathway by mediating the ubiquitination and degradation of cos. The protein is Protein hedgehog of Drosophila erecta (Fruit fly).